A 335-amino-acid chain; its full sequence is Phosphate acyltransferase (335 aa).

The protein belongs to the PlsX family. As to quaternary structure, homodimer. Probably interacts with PlsY.

It is found in the cytoplasm. The enzyme catalyses a fatty acyl-[ACP] + phosphate = an acyl phosphate + holo-[ACP]. Its pathway is lipid metabolism; phospholipid metabolism. In terms of biological role, catalyzes the reversible formation of acyl-phosphate (acyl-PO(4)) from acyl-[acyl-carrier-protein] (acyl-ACP). This enzyme utilizes acyl-ACP as fatty acyl donor, but not acyl-CoA. The sequence is that of Phosphate acyltransferase from Heliobacterium modesticaldum (strain ATCC 51547 / Ice1).